A 345-amino-acid chain; its full sequence is Dihydroorotase (345 aa).

Zn(2+) contacts are provided by His-13 and His-15. Residues 15 to 17 (HLR) and Asn-41 contribute to the substrate site. The Zn(2+) site is built by Lys-100, His-137, and His-175. Lys-100 is subject to N6-carboxylysine. Residue His-137 participates in substrate binding. Leu-220 is a substrate binding site. Asp-248 provides a ligand contact to Zn(2+). The active site involves Asp-248. 2 residues coordinate substrate: His-252 and Ala-264.

The protein belongs to the metallo-dependent hydrolases superfamily. DHOase family. Class II DHOase subfamily. In terms of assembly, homodimer. Zn(2+) is required as a cofactor.

It carries out the reaction (S)-dihydroorotate + H2O = N-carbamoyl-L-aspartate + H(+). Its pathway is pyrimidine metabolism; UMP biosynthesis via de novo pathway; (S)-dihydroorotate from bicarbonate: step 3/3. In terms of biological role, catalyzes the reversible cyclization of carbamoyl aspartate to dihydroorotate. The polypeptide is Dihydroorotase (Laribacter hongkongensis (strain HLHK9)).